Reading from the N-terminus, the 357-residue chain is BLOC-1-related complex subunit 6 (357 aa).

The tract at residues 20 to 196 is disordered; the sequence is HQALVFGGGP…SGAGGGRRAT (177 aa). Low complexity predominate over residues 90-99; the sequence is GAGSRRGAPG. Over residues 138–149 the composition is skewed to acidic residues; it reads EQQEEEDNDEEA. Low complexity predominate over residues 150–162; that stretch reads AAGSRAGRSFSSR. Ser168 is subject to Phosphoserine. A Phosphothreonine modification is found at Thr196. Position 199 is a phosphoserine (Ser199). The segment at 227–256 is disordered; it reads LSGAPPPPPSAPARPCPAPAPTPTPAIPPI. The segment covering 230 to 256 has biased composition (pro residues); it reads APPPPPSAPARPCPAPAPTPTPAIPPI.

Belongs to the BORCS6 family. In terms of assembly, component of the BLOC-one-related complex (BORC) which is composed of BLOC1S1, BLOC1S2, BORCS5, BORCS6, BORCS7, BORCS8, KXD1 and SNAPIN.

The protein localises to the lysosome membrane. Functionally, as part of the BORC complex may play a role in lysosomes movement and localization at the cell periphery. Associated with the cytosolic face of lysosomes, the BORC complex may recruit ARL8B and couple lysosomes to microtubule plus-end-directed kinesin motor. This Homo sapiens (Human) protein is BLOC-1-related complex subunit 6.